Consider the following 124-residue polypeptide: MAASAVSYKERQFLAVIGDEDSVTGLLLAGIGHVTDGPDAQRNFLVVDSKTETSAIEKAFQNFTQERKDIAVLLINQHIAERIRHSVDSFADPFPAVLEIPSKDHPYDPEKDSVLKRVRRLFGE.

It belongs to the V-ATPase F subunit family. V-ATPase is a heteromultimeric enzyme composed of a peripheral catalytic V1 complex (components A to H) attached to an integral membrane V0 proton pore complex (components: a, c, c', c'', d, e, f and VOA1).

The protein resides in the vacuole membrane. Its function is as follows. Subunit of the V1 complex of vacuolar(H+)-ATPase (V-ATPase), a multisubunit enzyme composed of a peripheral complex (V1) that hydrolyzes ATP and a membrane integral complex (V0) that translocates protons. V-ATPase is responsible for acidifying and maintaining the pH of intracellular compartments. In Neosartorya fischeri (strain ATCC 1020 / DSM 3700 / CBS 544.65 / FGSC A1164 / JCM 1740 / NRRL 181 / WB 181) (Aspergillus fischerianus), this protein is V-type proton ATPase subunit F (vma7).